Here is an 88-residue protein sequence, read N- to C-terminus: Small ribosomal subunit protein bS20 (88 aa).

A disordered region spans residues 1–20; that stretch reads MANTAQARKRARQAVVQNAH.

This sequence belongs to the bacterial ribosomal protein bS20 family.

In terms of biological role, binds directly to 16S ribosomal RNA. This Ralstonia nicotianae (strain ATCC BAA-1114 / GMI1000) (Ralstonia solanacearum) protein is Small ribosomal subunit protein bS20.